A 417-amino-acid chain; its full sequence is Serine hydroxymethyltransferase (417 aa).

(6S)-5,6,7,8-tetrahydrofolate contacts are provided by residues L120 and 124–126 (GHL). At K229 the chain carries N6-(pyridoxal phosphate)lysine. (6S)-5,6,7,8-tetrahydrofolate is bound at residue 354–356 (SPF).

This sequence belongs to the SHMT family. In terms of assembly, homodimer. Requires pyridoxal 5'-phosphate as cofactor.

The protein resides in the cytoplasm. The catalysed reaction is (6R)-5,10-methylene-5,6,7,8-tetrahydrofolate + glycine + H2O = (6S)-5,6,7,8-tetrahydrofolate + L-serine. Its pathway is one-carbon metabolism; tetrahydrofolate interconversion. It functions in the pathway amino-acid biosynthesis; glycine biosynthesis; glycine from L-serine: step 1/1. Catalyzes the reversible interconversion of serine and glycine with tetrahydrofolate (THF) serving as the one-carbon carrier. This reaction serves as the major source of one-carbon groups required for the biosynthesis of purines, thymidylate, methionine, and other important biomolecules. Also exhibits THF-independent aldolase activity toward beta-hydroxyamino acids, producing glycine and aldehydes, via a retro-aldol mechanism. The protein is Serine hydroxymethyltransferase of Acinetobacter radioresistens.